We begin with the raw amino-acid sequence, 246 residues long: 5-oxoprolinase subunit A (246 aa).

It belongs to the LamB/PxpA family. In terms of assembly, forms a complex composed of PxpA, PxpB and PxpC.

It catalyses the reaction 5-oxo-L-proline + ATP + 2 H2O = L-glutamate + ADP + phosphate + H(+). Catalyzes the cleavage of 5-oxoproline to form L-glutamate coupled to the hydrolysis of ATP to ADP and inorganic phosphate. The sequence is that of 5-oxoprolinase subunit A from Cupriavidus pinatubonensis (strain JMP 134 / LMG 1197) (Cupriavidus necator (strain JMP 134)).